A 375-amino-acid chain; its full sequence is uncharacterized protein (375 aa).

A GP-PDE domain is found at 52–301 (VLLSAHRGSW…KQGFATYHES (250 aa)).

This is an uncharacterized protein from Sinorhizobium fredii (strain NBRC 101917 / NGR234).